Consider the following 297-residue polypeptide: CASP-like protein 2U8 (297 aa).

Residues 1–10 (MLELYEKRRA) are Cytoplasmic-facing. Residues 11–31 (LLLLRLAAMFLSLAALLITVL) traverse the membrane as a helical segment. The Extracellular portion of the chain corresponds to 32-64 (NREDGFFSINVFGSPQPILAKATADFTLVKGLK). The chain crosses the membrane as a helical span at residues 65–85 (FFAGAMGIVAGYSFLQLAIAM). Over 86-101 (ASIFSGAPSILGGKRM) the chain is Cytoplasmic. Residues 102–122 (AWLCFVGDMTASHLCAAAAAV) traverse the membrane as a helical segment. At 123-148 (SAQLAYLGKRGAPMWSAVCTYFSHYC) the chain is on the extracellular side. The helical transmembrane segment at 149-169 (LVFGLAVILAFLATLAALLVA) threads the bilayer. The Cytoplasmic portion of the chain corresponds to 170 to 297 (SISSYHLAYD…RVLEMETPCK (128 aa)).

This sequence belongs to the Casparian strip membrane proteins (CASP) family. Homodimer and heterodimers.

It is found in the cell membrane. This is CASP-like protein 2U8 from Selaginella moellendorffii (Spikemoss).